We begin with the raw amino-acid sequence, 329 residues long: Ketol-acid reductoisomerase (NADP(+)) (329 aa).

Residues 2-181 (VQKYYESDAD…GATRAVVFET (180 aa)) enclose the KARI N-terminal Rossmann domain. NADP(+) is bound by residues 25 to 28 (YGSQ), arginine 48, serine 52, and 82 to 85 (DENQ). The active site involves histidine 107. Glycine 133 lines the NADP(+) pocket. Residues 182-327 (TFAEETETDL…AEIRGFMPQF (146 aa)) form the KARI C-terminal knotted domain. Positions 190, 194, 226, and 230 each coordinate Mg(2+). Position 251 (serine 251) interacts with substrate.

Belongs to the ketol-acid reductoisomerase family. Mg(2+) is required as a cofactor.

It carries out the reaction (2R)-2,3-dihydroxy-3-methylbutanoate + NADP(+) = (2S)-2-acetolactate + NADPH + H(+). It catalyses the reaction (2R,3R)-2,3-dihydroxy-3-methylpentanoate + NADP(+) = (S)-2-ethyl-2-hydroxy-3-oxobutanoate + NADPH + H(+). It functions in the pathway amino-acid biosynthesis; L-isoleucine biosynthesis; L-isoleucine from 2-oxobutanoate: step 2/4. Its pathway is amino-acid biosynthesis; L-valine biosynthesis; L-valine from pyruvate: step 2/4. Involved in the biosynthesis of branched-chain amino acids (BCAA). Catalyzes an alkyl-migration followed by a ketol-acid reduction of (S)-2-acetolactate (S2AL) to yield (R)-2,3-dihydroxy-isovalerate. In the isomerase reaction, S2AL is rearranged via a Mg-dependent methyl migration to produce 3-hydroxy-3-methyl-2-ketobutyrate (HMKB). In the reductase reaction, this 2-ketoacid undergoes a metal-dependent reduction by NADPH to yield (R)-2,3-dihydroxy-isovalerate. This chain is Ketol-acid reductoisomerase (NADP(+)), found in Methanoculleus marisnigri (strain ATCC 35101 / DSM 1498 / JR1).